The sequence spans 999 residues: Caspase recruitment domain-containing protein 14 (999 aa).

The CARD domain maps to 15-107 (DEEMLWDMLE…DVYTLVTGLQ (93 aa)). Residues 125 to 411 (TECLAGAISS…QLRRLQAEAP (287 aa)) are a coiled coil. A maintains the protein in an inactive state region spans residues 409 to 565 (EAPGGPKQEA…RRPARKILSQ (157 aa)). Ser541 bears the Phosphoserine mark. Positions 572–655 (QGDALLEQIG…SCYLSVKINT (84 aa)) constitute a PDZ domain. Positions 803–986 (SESCFTLAPY…LLSCVRLAIA (184 aa)) constitute a Guanylate kinase-like domain.

As to quaternary structure, interacts (via CARD domain) with BCL10 (via CARD domain). Forms a complex with MALT1 and BCL10; resulting in the formation of a CBM (CARD14-BLC10-MALT1) complex. Interacts with TRAF2, TRAF3 and TRAF6.

The protein resides in the cytoplasm. Acts as a scaffolding protein that can activate the inflammatory transcription factor NF-kappa-B and p38/JNK MAP kinase signaling pathways. Forms a signaling complex with BCL10 and MALT1, and activates MALT1 proteolytic activity and inflammatory gene expression. MALT1 is indispensable for CARD14-induced activation of NF-kappa-B and p38/JNK MAP kinases. May play a role in signaling mediated by TRAF2, TRAF3 and TRAF6 and protects cells against apoptosis. This Mus musculus (Mouse) protein is Caspase recruitment domain-containing protein 14 (Card14).